Reading from the N-terminus, the 280-residue chain is 4-diphosphocytidyl-2-C-methyl-D-erythritol kinase (280 aa).

The active site involves lysine 8. An ATP-binding site is contributed by 91–101 (PVAAGLAGGST). The active site involves aspartate 133.

This sequence belongs to the GHMP kinase family. IspE subfamily.

It catalyses the reaction 4-CDP-2-C-methyl-D-erythritol + ATP = 4-CDP-2-C-methyl-D-erythritol 2-phosphate + ADP + H(+). The protein operates within isoprenoid biosynthesis; isopentenyl diphosphate biosynthesis via DXP pathway; isopentenyl diphosphate from 1-deoxy-D-xylulose 5-phosphate: step 3/6. Its function is as follows. Catalyzes the phosphorylation of the position 2 hydroxy group of 4-diphosphocytidyl-2C-methyl-D-erythritol. This chain is 4-diphosphocytidyl-2-C-methyl-D-erythritol kinase, found in Clostridium botulinum (strain ATCC 19397 / Type A).